The primary structure comprises 137 residues: ATP synthase epsilon chain (137 aa).

The protein belongs to the ATPase epsilon chain family. In terms of assembly, F-type ATPases have 2 components, CF(1) - the catalytic core - and CF(0) - the membrane proton channel. CF(1) has five subunits: alpha(3), beta(3), gamma(1), delta(1), epsilon(1). CF(0) has three main subunits: a, b and c.

It is found in the cell membrane. In terms of biological role, produces ATP from ADP in the presence of a proton gradient across the membrane. This Caldicellulosiruptor saccharolyticus (strain ATCC 43494 / DSM 8903 / Tp8T 6331) protein is ATP synthase epsilon chain.